A 421-amino-acid chain; its full sequence is Enolase (421 aa).

Q165 lines the (2R)-2-phosphoglycerate pocket. Catalysis depends on E207, which acts as the Proton donor. The Mg(2+) site is built by D244, E285, and D312. Residues K337, R366, S367, and K388 each coordinate (2R)-2-phosphoglycerate. K337 acts as the Proton acceptor in catalysis.

The protein belongs to the enolase family. Mg(2+) is required as a cofactor.

It is found in the cytoplasm. The protein localises to the secreted. It localises to the cell surface. It carries out the reaction (2R)-2-phosphoglycerate = phosphoenolpyruvate + H2O. It functions in the pathway carbohydrate degradation; glycolysis; pyruvate from D-glyceraldehyde 3-phosphate: step 4/5. In terms of biological role, catalyzes the reversible conversion of 2-phosphoglycerate (2-PG) into phosphoenolpyruvate (PEP). It is essential for the degradation of carbohydrates via glycolysis. The protein is Enolase of Ehrlichia canis (strain Jake).